The primary structure comprises 404 residues: Exodeoxyribonuclease 7 large subunit (404 aa).

This sequence belongs to the XseA family. In terms of assembly, heterooligomer composed of large and small subunits.

The protein localises to the cytoplasm. The enzyme catalyses Exonucleolytic cleavage in either 5'- to 3'- or 3'- to 5'-direction to yield nucleoside 5'-phosphates.. Its function is as follows. Bidirectionally degrades single-stranded DNA into large acid-insoluble oligonucleotides, which are then degraded further into small acid-soluble oligonucleotides. This chain is Exodeoxyribonuclease 7 large subunit, found in Tropheryma whipplei (strain TW08/27) (Whipple's bacillus).